We begin with the raw amino-acid sequence, 432 residues long: Glutamate-1-semialdehyde 2,1-aminomutase (432 aa).

Position 272 is an N6-(pyridoxal phosphate)lysine (Lys272).

Belongs to the class-III pyridoxal-phosphate-dependent aminotransferase family. HemL subfamily. In terms of assembly, homodimer. Requires pyridoxal 5'-phosphate as cofactor.

It localises to the cytoplasm. It catalyses the reaction (S)-4-amino-5-oxopentanoate = 5-aminolevulinate. The protein operates within porphyrin-containing compound metabolism; protoporphyrin-IX biosynthesis; 5-aminolevulinate from L-glutamyl-tRNA(Glu): step 2/2. Its pathway is porphyrin-containing compound metabolism; chlorophyll biosynthesis. The polypeptide is Glutamate-1-semialdehyde 2,1-aminomutase (Trichodesmium erythraeum (strain IMS101)).